We begin with the raw amino-acid sequence, 163 residues long: uncharacterized protein (163 aa).

2 disordered regions span residues 1–78 and 115–163; these read MHSL…NPHS and PKWL…LPCH.

This is an uncharacterized protein from Homo sapiens (Human).